The following is a 443-amino-acid chain: Postreplication repair E3 ubiquitin-protein ligase rad18 (443 aa).

An RING-type zinc finger spans residues 30–68; that stretch reads CQVCKDFFDNPVITSCSHTFCSLCIRRCLSTEGKCPTCR. Residues 106-157 form a disordered region; it reads GTDDSGDLAAEEPASKKRKIEPNAIVGTDGLPEEGIRTRSQSRGASRQPQAT. Over residues 143–157 the composition is skewed to polar residues; that stretch reads TRSQSRGASRQPQAT. Residues 175 to 202 form a UBZ4-type zinc finger; the sequence is LVPCPVCGRRMKEEAVFRHLDSCTGTAE. Positions 178, 181, 193, and 197 each coordinate Zn(2+). An SAP domain is found at 239–273; it reads LKDTVLRKKLKDLGIPNWGPRALLQRRHTEWLNLW. Composition is skewed to polar residues over residues 350–363 and 431–443; these read IPNASQANSDTPRS and PISSSASTHKTPH. A disordered region spans residues 350 to 443; sequence IPNASQANSD…SSASTHKTPH (94 aa).

It belongs to the RAD18 family. In terms of assembly, interacts with E2 UBC2, forming a complex with ubiquitin ligase activity.

The protein localises to the nucleus. It carries out the reaction S-ubiquitinyl-[E2 ubiquitin-conjugating enzyme]-L-cysteine + [acceptor protein]-L-lysine = [E2 ubiquitin-conjugating enzyme]-L-cysteine + N(6)-ubiquitinyl-[acceptor protein]-L-lysine.. It functions in the pathway protein modification; protein ubiquitination. In terms of biological role, E3 RING-finger protein, member of the UBC2/RAD6 epistasis group. Associates to the E2 ubiquitin conjugating enzyme UBC2/RAD6 to form the UBC2-RAD18 ubiquitin ligase complex involved in postreplicative repair (PRR) of damaged DNA. The chain is Postreplication repair E3 ubiquitin-protein ligase rad18 (uvsH) from Emericella nidulans (strain FGSC A4 / ATCC 38163 / CBS 112.46 / NRRL 194 / M139) (Aspergillus nidulans).